We begin with the raw amino-acid sequence, 467 residues long: Uronate isomerase (467 aa).

The protein belongs to the metallo-dependent hydrolases superfamily. Uronate isomerase family.

It carries out the reaction D-glucuronate = D-fructuronate. The enzyme catalyses aldehydo-D-galacturonate = keto-D-tagaturonate. It functions in the pathway carbohydrate metabolism; pentose and glucuronate interconversion. The sequence is that of Uronate isomerase from Streptococcus uberis (strain ATCC BAA-854 / 0140J).